The sequence spans 452 residues: Putative zinc metalloprotease VC_2253 (452 aa).

Histidine 22 provides a ligand contact to Zn(2+). The active site involves glutamate 23. Histidine 26 is a binding site for Zn(2+). A helical transmembrane segment spans residues 98–120 (SAIVSAGPIFNFLFAIFAYWLVF). Residues 197–292 (NLRDWNFDPE…QVELTLIPDS (96 aa)) enclose the PDZ domain. Helical transmembrane passes span 378-400 (FVYF…LVPL) and 428-447 (MGYR…AIFN).

This sequence belongs to the peptidase M50B family. It depends on Zn(2+) as a cofactor.

The protein resides in the cell inner membrane. This Vibrio cholerae serotype O1 (strain ATCC 39315 / El Tor Inaba N16961) protein is Putative zinc metalloprotease VC_2253.